The chain runs to 498 residues: Myotilin (498 aa).

Disordered stretches follow at residues Met1–Gln46, Met64–Gln151, and Gln202–Asp241. The residue at position 20 (Arg20) is an Omega-N-methylarginine. Positions Ser29–Gln43 are enriched in low complexity. The segment covering Ala77–Asn138 has biased composition (polar residues). A necessary for interaction with ACTN1 region spans residues Ser79–Ile150. The span at Gln202–Gln212 shows a compositional bias: low complexity. The tract at residues Ser215 to Tyr493 is necessary for interaction with FLNC. The segment at Ser215–Leu498 is necessary for interaction with ACTA1. Positions Val222–Gly235 are enriched in polar residues. 2 consecutive Ig-like C2-type domains span residues Pro250–Thr335 and Pro349–Thr441.

It belongs to the myotilin/palladin family. As to quaternary structure, homodimer. Interacts with ACTA1, ACTN1, FLNA, FLNB, FLNC and MYOZ2. Interacts with the C-terminal region of MYOZ1. As to expression, expressed in skeletal muscle (at protein level). Expressed in skeletal muscle, heart, bone marrow and thyroid gland.

The protein resides in the cell membrane. It is found in the sarcolemma. The protein localises to the cytoplasm. It localises to the cytoskeleton. Its subcellular location is the myofibril. The protein resides in the sarcomere. It is found in the z line. Functionally, component of a complex of multiple actin cross-linking proteins. Involved in the control of myofibril assembly and stability at the Z lines in muscle cells. The sequence is that of Myotilin (MYOT) from Homo sapiens (Human).